Reading from the N-terminus, the 193-residue chain is MSRSISKLRETKETKVEIFLDIDNKGEIEVSTPVNFFNHMLYTLLYYMNSTAKVNVVDRQNYDDHHVVEDTAITLGQAFKEVLGDKKGIRRFANTIIPMDDALVLVAVDISGRGVSNVEFKLKRNTIGDLAIENIYHFFSSFSYHSGVNLHVIQLRGKNTHHVLEASFKGLGMSLYEASRILFEEVRSLKGSL.

It belongs to the imidazoleglycerol-phosphate dehydratase family.

It localises to the cytoplasm. The catalysed reaction is D-erythro-1-(imidazol-4-yl)glycerol 3-phosphate = 3-(imidazol-4-yl)-2-oxopropyl phosphate + H2O. It participates in amino-acid biosynthesis; L-histidine biosynthesis; L-histidine from 5-phospho-alpha-D-ribose 1-diphosphate: step 6/9. The polypeptide is Imidazoleglycerol-phosphate dehydratase (Sulfolobus acidocaldarius (strain ATCC 33909 / DSM 639 / JCM 8929 / NBRC 15157 / NCIMB 11770)).